The sequence spans 248 residues: UPF0173 metal-dependent hydrolase Hlac_1347 (248 aa).

The protein belongs to the UPF0173 family.

The protein is UPF0173 metal-dependent hydrolase Hlac_1347 of Halorubrum lacusprofundi (strain ATCC 49239 / DSM 5036 / JCM 8891 / ACAM 34).